A 63-amino-acid polypeptide reads, in one-letter code: Hyphancin-3F (63 aa).

A signal peptide spans 1–22 (MNFSRILFFVFACFVALASVSA). The propeptide at 23–26 (APEP) is removed by a dipeptidylpeptidase. L61 bears the Leucine amide mark.

This sequence belongs to the cecropin family.

It localises to the secreted. Its function is as follows. Has antibacterial activity. The polypeptide is Hyphancin-3F (Hyphantria cunea (Fall webworm moth)).